The chain runs to 175 residues: Large ribosomal subunit protein uL10 (175 aa).

It belongs to the universal ribosomal protein uL10 family. As to quaternary structure, part of the ribosomal stalk of the 50S ribosomal subunit. The N-terminus interacts with L11 and the large rRNA to form the base of the stalk. The C-terminus forms an elongated spine to which L12 dimers bind in a sequential fashion forming a multimeric L10(L12)X complex.

In terms of biological role, forms part of the ribosomal stalk, playing a central role in the interaction of the ribosome with GTP-bound translation factors. In Synechococcus sp. (strain CC9605), this protein is Large ribosomal subunit protein uL10.